The chain runs to 475 residues: NADH-ubiquinone oxidoreductase chain 2 (475 aa).

13 consecutive transmembrane segments (helical) span residues 45–65 (LAVLALSFVAYLAWESIGIQY), 82–102 (APIVLLLIILVITLLVYLTTT), 112–132 (IALLMLVNLIGLILFPMVNDL), 133–153 (IPLYVIIELQSYSLYLLTGVY), 162–182 (AAILYFVTGGIASVLILLSSA), 198–220 (TYYSISGINTWTSFDILLIALVF), 240–260 (LYITAYISIVAKVSIMSFIYL), 262–282 (IHLFSTQLLILAFYLSVAVAA), 291–311 (IKSILAYSGILNFGYLLTAVL), 318–338 (YIYIIQYSLTHVTIFLCILAI), 365–385 (LCIALIVCLFSLIGIPPLPGF), 402–422 (LEALTIIVFSVIATYYYAYII), and 447–467 (FIISILMVILITFYMYLPTLL).

It belongs to the complex I subunit 2 family.

Its subcellular location is the mitochondrion inner membrane. It catalyses the reaction a ubiquinone + NADH + 5 H(+)(in) = a ubiquinol + NAD(+) + 4 H(+)(out). Functionally, core subunit of the mitochondrial membrane respiratory chain NADH dehydrogenase (Complex I) that is believed to belong to the minimal assembly required for catalysis. Complex I functions in the transfer of electrons from NADH to the respiratory chain. The immediate electron acceptor for the enzyme is believed to be ubiquinone. The sequence is that of NADH-ubiquinone oxidoreductase chain 2 (NAD2) from Candida albicans (strain SC5314 / ATCC MYA-2876) (Yeast).